The sequence spans 147 residues: UPF0260 protein CJA_2436 (147 aa).

Belongs to the UPF0260 family.

In Cellvibrio japonicus (strain Ueda107) (Pseudomonas fluorescens subsp. cellulosa), this protein is UPF0260 protein CJA_2436.